Consider the following 320-residue polypeptide: Ferrochelatase (320 aa).

Residues His194 and Glu275 each contribute to the Fe cation site.

This sequence belongs to the ferrochelatase family.

The protein resides in the cytoplasm. It carries out the reaction heme b + 2 H(+) = protoporphyrin IX + Fe(2+). It participates in porphyrin-containing compound metabolism; protoheme biosynthesis; protoheme from protoporphyrin-IX: step 1/1. Its function is as follows. Catalyzes the ferrous insertion into protoporphyrin IX. This is Ferrochelatase from Xylella fastidiosa (strain M23).